A 418-amino-acid polypeptide reads, in one-letter code: Tyrosine--tRNA ligase (418 aa).

The short motif at 42–51 is the 'HIGH' region element; it reads PTSPDLHLGH. The 'KMSKS' region signature appears at 226 to 230; that stretch reads KMSKS. Lysine 229 contributes to the ATP binding site. The region spanning 339–400 is the S4 RNA-binding domain; the sequence is VRLVALLTKS…GKRNFIKVRL (62 aa).

It belongs to the class-I aminoacyl-tRNA synthetase family. TyrS type 2 subfamily. As to quaternary structure, homodimer.

The protein localises to the cytoplasm. The enzyme catalyses tRNA(Tyr) + L-tyrosine + ATP = L-tyrosyl-tRNA(Tyr) + AMP + diphosphate + H(+). Functionally, catalyzes the attachment of tyrosine to tRNA(Tyr) in a two-step reaction: tyrosine is first activated by ATP to form Tyr-AMP and then transferred to the acceptor end of tRNA(Tyr). This Xylella fastidiosa (strain Temecula1 / ATCC 700964) protein is Tyrosine--tRNA ligase.